Here is a 102-residue protein sequence, read N- to C-terminus: A-type ATP synthase subunit F (102 aa).

The protein belongs to the V-ATPase F subunit family. As to quaternary structure, has multiple subunits with at least A(3), B(3), C, D, E, F, H, I and proteolipid K(x).

It localises to the cell membrane. Functionally, component of the A-type ATP synthase that produces ATP from ADP in the presence of a proton gradient across the membrane. The protein is A-type ATP synthase subunit F of Thermococcus onnurineus (strain NA1).